Consider the following 168-residue polypeptide: Cell division inhibitor SulA (168 aa).

The ftsZ binding stretch occupies residues 106-112; sequence ALLTGNY. Residues 161-168 are lon protease binding; the sequence is KIHSYLYH.

This sequence belongs to the SulA family. As to quaternary structure, interacts with FtsZ. Is rapidly cleaved and degraded by the Lon protease once DNA damage is repaired.

In terms of biological role, component of the SOS system and an inhibitor of cell division. Accumulation of SulA causes rapid cessation of cell division and the appearance of long, non-septate filaments. In the presence of GTP, binds a polymerization-competent form of FtsZ in a 1:1 ratio, thus inhibiting FtsZ polymerization and therefore preventing it from participating in the assembly of the Z ring. This mechanism prevents the premature segregation of damaged DNA to daughter cells during cell division. In Yersinia pseudotuberculosis serotype O:1b (strain IP 31758), this protein is Cell division inhibitor SulA.